Reading from the N-terminus, the 373-residue chain is Probable pectin lyase D (373 aa).

Positions Met1–Gly24 are cleaved as a signal peptide. Disulfide bonds link Cys82–Cys101 and Cys91–Cys225. Asn128 carries N-linked (GlcNAc...) asparagine glycosylation. Arg255 is an active-site residue. Asn274 carries an N-linked (GlcNAc...) asparagine glycan. Cysteines 321 and 329 form a disulfide. N-linked (GlcNAc...) asparagine glycosylation occurs at Asn348. Over residues Leu354–Ser366 the composition is skewed to low complexity. Residues Leu354 to Leu373 are disordered.

It belongs to the polysaccharide lyase 1 family.

The protein resides in the secreted. It carries out the reaction Eliminative cleavage of (1-&gt;4)-alpha-D-galacturonan methyl ester to give oligosaccharides with 4-deoxy-6-O-methyl-alpha-D-galact-4-enuronosyl groups at their non-reducing ends.. Functionally, pectinolytic enzymes consist of four classes of enzymes: pectin lyase, polygalacturonase, pectin methylesterase and rhamnogalacturonase. Among pectinolytic enzymes, pectin lyase is the most important in depolymerization of pectin, since it cleaves internal glycosidic bonds of highly methylated pectins. The chain is Probable pectin lyase D (pelD) from Aspergillus niger (strain ATCC MYA-4892 / CBS 513.88 / FGSC A1513).